The sequence spans 215 residues: Ribonuclease T (215 aa).

An Exonuclease domain is found at 20 to 194 (VVIDVETAGF…YDTERTAVLF (175 aa)). Residues Asp23, Glu25, His181, and Asp186 each contribute to the Mg(2+) site. Catalysis depends on His181, which acts as the Proton donor/acceptor.

Belongs to the RNase T family. As to quaternary structure, homodimer. Requires Mg(2+) as cofactor.

Functionally, trims short 3' overhangs of a variety of RNA species, leaving a one or two nucleotide 3' overhang. Responsible for the end-turnover of tRNA: specifically removes the terminal AMP residue from uncharged tRNA (tRNA-C-C-A). Also appears to be involved in tRNA biosynthesis. The protein is Ribonuclease T of Shigella boydii serotype 4 (strain Sb227).